We begin with the raw amino-acid sequence, 82 residues long: ATP synthase subunit c, chloroplastic (82 aa).

2 helical membrane passes run 4-24 (IISA…AIGP) and 57-77 (LAFM…LLFA).

Belongs to the ATPase C chain family. In terms of assembly, F-type ATPases have 2 components, F(1) - the catalytic core - and F(0) - the membrane proton channel. F(1) has five subunits: alpha(3), beta(3), gamma(1), delta(1), epsilon(1). F(0) has four main subunits: a(1), b(1), b'(1) and c(10-14). The alpha and beta chains form an alternating ring which encloses part of the gamma chain. F(1) is attached to F(0) by a central stalk formed by the gamma and epsilon chains, while a peripheral stalk is formed by the delta, b and b' chains.

It is found in the plastid. It localises to the chloroplast thylakoid membrane. In terms of biological role, f(1)F(0) ATP synthase produces ATP from ADP in the presence of a proton or sodium gradient. F-type ATPases consist of two structural domains, F(1) containing the extramembraneous catalytic core and F(0) containing the membrane proton channel, linked together by a central stalk and a peripheral stalk. During catalysis, ATP synthesis in the catalytic domain of F(1) is coupled via a rotary mechanism of the central stalk subunits to proton translocation. Functionally, key component of the F(0) channel; it plays a direct role in translocation across the membrane. A homomeric c-ring of between 10-14 subunits forms the central stalk rotor element with the F(1) delta and epsilon subunits. In Antithamnion sp. (Red alga), this protein is ATP synthase subunit c, chloroplastic.